A 348-amino-acid polypeptide reads, in one-letter code: L-asparaginase 2 (348 aa).

The first 22 residues, 1 to 22 (MEFFKKTALAALVMGFSGAALA), serve as a signal peptide directing secretion. Positions 24 to 348 (PNITILATGG…QQIQQIFNQY (325 aa)) constitute an Asparaginase/glutaminase domain. Threonine 34 serves as the catalytic O-isoaspartyl threonine intermediate. Residues 80–81 (SQ) and 111–112 (TD) each bind substrate. A disulfide bridge links cysteine 99 with cysteine 127.

It belongs to the asparaginase 1 family. In terms of assembly, homotetramer.

Its subcellular location is the periplasm. The catalysed reaction is L-asparagine + H2O = L-aspartate + NH4(+). The protein is L-asparaginase 2 (ansB) of Escherichia coli (strain K12).